Reading from the N-terminus, the 127-residue chain is Translation initiation factor 5A (127 aa).

Lys36 is subject to Hypusine.

The protein belongs to the eIF-5A family.

The protein localises to the cytoplasm. Functions by promoting the formation of the first peptide bond. The chain is Translation initiation factor 5A (eif5a) from Halobacterium salinarum (strain ATCC 700922 / JCM 11081 / NRC-1) (Halobacterium halobium).